The sequence spans 88 residues: Small ribosomal subunit protein uS17 (88 aa).

It belongs to the universal ribosomal protein uS17 family. In terms of assembly, part of the 30S ribosomal subunit.

Functionally, one of the primary rRNA binding proteins, it binds specifically to the 5'-end of 16S ribosomal RNA. This Marinobacter nauticus (strain ATCC 700491 / DSM 11845 / VT8) (Marinobacter aquaeolei) protein is Small ribosomal subunit protein uS17.